The chain runs to 517 residues: Glutamate--tRNA ligase (517 aa).

The short motif at 10-20 (PSPSGFLHVGG) is the 'HIGH' region element. Zn(2+) contacts are provided by Cys107, Cys109, Cys134, and Asp136. The short motif at 250–254 (KLSKR) is the 'KMSKS' region element. Position 253 (Lys253) interacts with ATP.

This sequence belongs to the class-I aminoacyl-tRNA synthetase family. Glutamate--tRNA ligase type 1 subfamily. Monomer. Zn(2+) is required as a cofactor.

Its subcellular location is the cytoplasm. It catalyses the reaction tRNA(Glu) + L-glutamate + ATP = L-glutamyl-tRNA(Glu) + AMP + diphosphate. In terms of biological role, catalyzes the attachment of glutamate to tRNA(Glu) in a two-step reaction: glutamate is first activated by ATP to form Glu-AMP and then transferred to the acceptor end of tRNA(Glu). The sequence is that of Glutamate--tRNA ligase from Leptospira biflexa serovar Patoc (strain Patoc 1 / ATCC 23582 / Paris).